Consider the following 289-residue polypeptide: Protease HtpX (289 aa).

2 helical membrane-spanning segments follow: residues 4 to 24 (IMLFLATNLAVVLVLSVVLNI) and 36 to 56 (LSGLLVMAAVFGFGGAFISLM). Histidine 143 provides a ligand contact to Zn(2+). Residue glutamate 144 is part of the active site. Histidine 147 provides a ligand contact to Zn(2+). 2 helical membrane passes run 158 to 178 (LMQGVVNTFVIFLSRFIANIV) and 192 to 212 (MVYFGVSMVLELVFGFLASFL). Residue glutamate 221 participates in Zn(2+) binding.

This sequence belongs to the peptidase M48B family. The cofactor is Zn(2+).

The protein resides in the cell inner membrane. In Vibrio campbellii (strain ATCC BAA-1116), this protein is Protease HtpX.